We begin with the raw amino-acid sequence, 776 residues long: Protein translocase subunit SecA 2 (776 aa).

Residues Gln-80, 98–102, and Asp-486 contribute to the ATP site; that span reads GEGKT.

The protein belongs to the SecA family. As to quaternary structure, monomer and homodimer. Part of the essential Sec protein translocation apparatus which comprises SecA, SecYEG and auxiliary proteins SecDF. Other proteins may also be involved.

It is found in the cell membrane. The protein resides in the cytoplasm. The catalysed reaction is ATP + H2O + cellular proteinSide 1 = ADP + phosphate + cellular proteinSide 2.. In terms of biological role, part of the Sec protein translocase complex. Interacts with the SecYEG preprotein conducting channel. Has a central role in coupling the hydrolysis of ATP to the transfer of proteins into and across the cell membrane, serving as an ATP-driven molecular motor driving the stepwise translocation of polypeptide chains across the membrane. In Listeria monocytogenes serotype 4b (strain F2365), this protein is Protein translocase subunit SecA 2.